The chain runs to 297 residues: MSLALLQQHSPKIIDGKAIAQSVLEEVKLEVERYKAQGIEPCLAVVLVGEDPASQVYVRNKVQKAAFVGIRSLEFRFDADLSEDELLTQIDRLNTERGVHGILVQLPLPKQINETRVLERIHPQKDVDGFHSENVGGLSQGRDVLTPCTPTGCIRLLKDSLGDDLSGLHAVVIGRSNIVGKPMAALLLKESCTVTVVHSKTRNIEQVCQQADIVVAAVGKANMINASYLKADAVVIDVGINRIMTHEKTRLVGDVDFEDALPMVSAITPVPGGVGPMTIAYLMKNTLQAVRLQHPQI.

NADP(+) contacts are provided by residues 174–176 (GRS), Ser199, and Ile240.

This sequence belongs to the tetrahydrofolate dehydrogenase/cyclohydrolase family. Homodimer.

The catalysed reaction is (6R)-5,10-methylene-5,6,7,8-tetrahydrofolate + NADP(+) = (6R)-5,10-methenyltetrahydrofolate + NADPH. The enzyme catalyses (6R)-5,10-methenyltetrahydrofolate + H2O = (6R)-10-formyltetrahydrofolate + H(+). Its pathway is one-carbon metabolism; tetrahydrofolate interconversion. In terms of biological role, catalyzes the oxidation of 5,10-methylenetetrahydrofolate to 5,10-methenyltetrahydrofolate and then the hydrolysis of 5,10-methenyltetrahydrofolate to 10-formyltetrahydrofolate. The protein is Bifunctional protein FolD 1 of Acinetobacter baylyi (strain ATCC 33305 / BD413 / ADP1).